A 1047-amino-acid polypeptide reads, in one-letter code: Jouberin (1047 aa).

Composition is skewed to basic and acidic residues over residues 1 to 17 and 77 to 86; these read MEQE…EKVR and LLHDDKLGSE. 2 disordered regions span residues 1-44 and 67-185; these read MEQE…LTEA and EQLT…SPVH. Residues 1–285 form an interaction with HAP1 region; sequence MEQETPEKVD…IFNENFPYLL (285 aa). Over residues 87-96 the composition is skewed to basic residues; that stretch reads KRKKKKKKKV. The segment covering 116 to 132 has biased composition (basic and acidic residues); the sequence is GEQKKEGAPEGSHHREG. Residues 150-160 show a composition bias toward basic residues; it reads PKPKKMKKKPK. The segment covering 173–185 has biased composition (basic and acidic residues); the sequence is GVHEITGRDSPVH. WD repeat units lie at residues 458-500, 503-542, 546-586, 593-632, 649-688, 692-731, and 736-777; these read AGER…FMRE, GHLN…TSTF, PHPS…DAAI, VHKS…TDVQ, FRGV…ARKF, ANYR…QVAM, and PFKS…AQQE. At S854 the chain carries Phosphoserine. The 61-residue stretch at 903-963 folds into the SH3 domain; the sequence is DPPPMVVALY…PANHVASETL (61 aa). Composition is skewed to basic and acidic residues over residues 964-1003 and 1012-1040; these read YRDS…RFLD and GHSE…EPTV. The tract at residues 964 to 1047 is disordered; sequence YRDSPPKVKE…PTVRKVTLIE (84 aa). S975 carries the phosphoserine modification.

As to quaternary structure, self-associates. Part of the tectonic-like complex (also named B9 complex). Interacts with MKS1. Interacts with NPHP1; probably as heterodimers and/or AHI1(2):NPHP1(2) heterotetramers. Interacts (via SH3 domain) with the dynamin GTPase DNM2. Interacts with HAP1; probably as AHI1(2):HAP1(2) heterotetramers. Interacts with RAB8A. Interacts with CEND1. Interacts with SPATA7.

The protein localises to the cytoplasm. Its subcellular location is the cytoskeleton. The protein resides in the cilium basal body. It localises to the microtubule organizing center. It is found in the centrosome. The protein localises to the centriole. Its subcellular location is the cell junction. The protein resides in the adherens junction. Functionally, involved in vesicle trafficking and required for ciliogenesis, formation of primary non-motile cilium, and recruitment of RAB8A to the basal body of primary cilium. Component of the tectonic-like complex, a complex localized at the transition zone of primary cilia and acting as a barrier that prevents diffusion of transmembrane proteins between the cilia and plasma membranes. Involved in neuronal differentiation. As a positive modulator of classical Wnt signaling, may play a crucial role in ciliary signaling during cerebellum embryonic development. This is Jouberin (Ahi1) from Rattus norvegicus (Rat).